The sequence spans 97 residues: uncharacterized protein (97 aa).

This is an uncharacterized protein from Haemophilus influenzae (strain ATCC 51907 / DSM 11121 / KW20 / Rd).